The primary structure comprises 193 residues: Probable DNA-directed RNA polymerase subunit delta (193 aa).

In terms of domain architecture, HTH HARE-type spans 14-81 (LALVEIATAI…GNNEWGLRAW (68 aa)). Acidic residues-rich tracts occupy residues 119–174 (DDDV…DDNL) and 182–193 (DLDDLSDGDIEK). The tract at residues 119–193 (DDDVIDYNDD…DDLSDGDIEK (75 aa)) is disordered.

This sequence belongs to the RpoE family. As to quaternary structure, RNAP is composed of a core of 2 alpha, a beta and a beta' subunits. The core is associated with a delta subunit and one of several sigma factors.

Participates in both the initiation and recycling phases of transcription. In the presence of the delta subunit, RNAP displays an increased specificity of transcription, a decreased affinity for nucleic acids, and an increased efficiency of RNA synthesis because of enhanced recycling. This Leuconostoc citreum (strain KM20) protein is Probable DNA-directed RNA polymerase subunit delta.